Here is a 97-residue protein sequence, read N- to C-terminus: Aspartyl/glutamyl-tRNA(Asn/Gln) amidotransferase subunit C (97 aa).

It belongs to the GatC family. As to quaternary structure, heterotrimer of A, B and C subunits.

The enzyme catalyses L-glutamyl-tRNA(Gln) + L-glutamine + ATP + H2O = L-glutaminyl-tRNA(Gln) + L-glutamate + ADP + phosphate + H(+). The catalysed reaction is L-aspartyl-tRNA(Asn) + L-glutamine + ATP + H2O = L-asparaginyl-tRNA(Asn) + L-glutamate + ADP + phosphate + 2 H(+). In terms of biological role, allows the formation of correctly charged Asn-tRNA(Asn) or Gln-tRNA(Gln) through the transamidation of misacylated Asp-tRNA(Asn) or Glu-tRNA(Gln) in organisms which lack either or both of asparaginyl-tRNA or glutaminyl-tRNA synthetases. The reaction takes place in the presence of glutamine and ATP through an activated phospho-Asp-tRNA(Asn) or phospho-Glu-tRNA(Gln). The chain is Aspartyl/glutamyl-tRNA(Asn/Gln) amidotransferase subunit C from Synechococcus sp. (strain CC9605).